The primary structure comprises 417 residues: Monooxygenase cfoF (417 aa).

FAD is bound by residues 45–48 (DRDK), R126, and D327. The span at 389 to 399 (AHTTQLDRDQF) shows a compositional bias: basic and acidic residues. Positions 389 to 417 (AHTTQLDRDQFTDGSGANDFLVGQQHSDK) are disordered.

Belongs to the aromatic-ring hydroxylase family. KMO subfamily. FAD is required as a cofactor.

Its pathway is secondary metabolite biosynthesis; flavonoid biosynthesis. In terms of biological role, monooxygenase; part of the gene cluster that mediates the biosynthesis of chlorflavonin, a fungal flavonoid with acetolactate synthase inhibitory activity. Within the pathway, cfoF is responsible for the hydroxylation of the flavonoid skeleton at position C3. The pathway begins with the PKS-NRPS hybrid synthetase cfoA that uses benzoic acid or p-hydroxybenzoic acid as a starter unit with four rounds of chain elongation using malonyl-CoA to form the chalcone skeleton. Then, a new type of chalcone isomerase, cfoK, catalyzes the conversion of the chalcone into a flavanone by a histidine-mediated oxa-Michael addition mechanism. The desaturation of flavanone to flavone is catalyzed by a new type of flavone synthase, the flavin mononucleotide (FMN)-dependent oxidoreductase cfoJ. Monooxygenases cfoF, cfoG, and P450 cfoH are responsible for the hydroxylation of the flavonoid skeleton at sites C3, C8, and C2', respectively. Like cfoF, the dehydratase cfoI plays also a role in the hydroxylation of position C3. Methyltransferases cfoB, cfoC, and cfoD then catalyze the methylation of C7-OH, C8-OH, and C3-OH, respectively. Finally, the monooxygenase cfoE is responsible for the chlorination of flavonoid at position C3'. This chain is Monooxygenase cfoF, found in Aspergillus candidus.